Here is a 288-residue protein sequence, read N- to C-terminus: Quinate/shikimate dehydrogenase (288 aa).

2 residues coordinate substrate: lysine 71 and aspartate 107. Residues 132 to 135 (AGGA), 155 to 158 (NRRD), lysine 205, 232 to 235 (CVYN), and glycine 255 each bind NAD(+).

It belongs to the shikimate dehydrogenase family. As to quaternary structure, homodimer.

The catalysed reaction is L-quinate + NAD(+) = 3-dehydroquinate + NADH + H(+). It carries out the reaction L-quinate + NADP(+) = 3-dehydroquinate + NADPH + H(+). The enzyme catalyses shikimate + NADP(+) = 3-dehydroshikimate + NADPH + H(+). It catalyses the reaction shikimate + NAD(+) = 3-dehydroshikimate + NADH + H(+). The protein operates within metabolic intermediate biosynthesis; chorismate biosynthesis; chorismate from D-erythrose 4-phosphate and phosphoenolpyruvate: step 4/7. Its function is as follows. The actual biological function of YdiB remains unclear, nor is it known whether 3-dehydroshikimate or quinate represents the natural substrate. Catalyzes the reversible NAD-dependent reduction of both 3-dehydroshikimate (DHSA) and 3-dehydroquinate to yield shikimate (SA) and quinate, respectively. It can use both NAD or NADP for catalysis, however it has higher catalytic efficiency with NAD. In Escherichia coli O81 (strain ED1a), this protein is Quinate/shikimate dehydrogenase.